A 375-amino-acid chain; its full sequence is ATP phosphoribosyltransferase regulatory subunit (375 aa).

This sequence belongs to the class-II aminoacyl-tRNA synthetase family. HisZ subfamily. Heteromultimer composed of HisG and HisZ subunits.

The protein resides in the cytoplasm. It participates in amino-acid biosynthesis; L-histidine biosynthesis; L-histidine from 5-phospho-alpha-D-ribose 1-diphosphate: step 1/9. Functionally, required for the first step of histidine biosynthesis. May allow the feedback regulation of ATP phosphoribosyltransferase activity by histidine. This is ATP phosphoribosyltransferase regulatory subunit from Agrobacterium fabrum (strain C58 / ATCC 33970) (Agrobacterium tumefaciens (strain C58)).